We begin with the raw amino-acid sequence, 207 residues long: MTKKSTKSEAASKTKKSGVPETGAQGVRAGGADHADAAHLGTVNNALVNHHYLEEKEFQTVAETLQRNLATTISLYLKFKKYHWDIRGRFFRDLHLAYDEFIAEIFPSIDEQAERLVALGGSPLAAPADLARYSTVQVPQETVRDARTQVADLVQDLSRVGKGYRDDSQACDEANDPVTADMYNGYAATIDKIRWMLQAIMDDERLD.

Residues 1–12 (MTKKSTKSEAAS) show a composition bias toward basic and acidic residues. Residues 1–31 (MTKKSTKSEAASKTKKSGVPETGAQGVRAGG) form a disordered region. Fe cation-binding residues include His83, Asp110, and Glu114.

The protein belongs to the Dps family. The 12 subunits form a hollow sphere into which the mineral iron core of up to 500 Fe(3+) can be deposited. The homododecameric forms at higher concentration of salt, the homodimeric form under reducing, low-salt conditions. The assembly of the dodecamer is irreversible.

It localises to the cytoplasm. It is found in the nucleoid. The catalysed reaction is 2 Fe(2+) + H2O2 + 2 H(+) = 2 Fe(3+) + 2 H2O. Functionally, protects DNA from oxidative damage by sequestering intracellular Fe(2+) ion and storing it in the form of Fe(3+) oxyhydroxide mineral. One hydrogen peroxide oxidizes two Fe(2+) ions, which prevents hydroxyl radical production by the Fenton reaction. Both oligomeric forms of dps exhibit ferroxidase activity and DNA binding. Dodecameric dps is capable of Fe(2+) oxidation/mineralization. Only dimeric dps affords efficient DNA protection against hydroxyl radical-mediated cleavage. In Deinococcus radiodurans (strain ATCC 13939 / DSM 20539 / JCM 16871 / CCUG 27074 / LMG 4051 / NBRC 15346 / NCIMB 9279 / VKM B-1422 / R1), this protein is DNA protection during starvation protein 1 (dps1).